A 334-amino-acid polypeptide reads, in one-letter code: N-acetyl-gamma-glutamyl-phosphate reductase (334 aa).

Cys-145 is an active-site residue. Positions Gly-173 to Gln-192 are disordered.

Belongs to the NAGSA dehydrogenase family. Type 1 subfamily.

The protein resides in the cytoplasm. It catalyses the reaction N-acetyl-L-glutamate 5-semialdehyde + phosphate + NADP(+) = N-acetyl-L-glutamyl 5-phosphate + NADPH + H(+). It participates in amino-acid biosynthesis; L-arginine biosynthesis; N(2)-acetyl-L-ornithine from L-glutamate: step 3/4. Catalyzes the NADPH-dependent reduction of N-acetyl-5-glutamyl phosphate to yield N-acetyl-L-glutamate 5-semialdehyde. This Methanocella arvoryzae (strain DSM 22066 / NBRC 105507 / MRE50) protein is N-acetyl-gamma-glutamyl-phosphate reductase.